Consider the following 377-residue polypeptide: Queuine tRNA-ribosyltransferase (377 aa).

Catalysis depends on Asp93, which acts as the Proton acceptor. Substrate-binding positions include 93–97 (DSGGF), Asp147, Gln190, and Gly216. An RNA binding region spans residues 247–253 (GVGTPDD). Asp266 functions as the Nucleophile in the catalytic mechanism. Positions 271–275 (TRAGR) are RNA binding; important for wobble base 34 recognition. Residues Cys304, Cys306, Cys309, and His335 each coordinate Zn(2+).

The protein belongs to the queuine tRNA-ribosyltransferase family. As to quaternary structure, homodimer. Within each dimer, one monomer is responsible for RNA recognition and catalysis, while the other monomer binds to the replacement base PreQ1. Requires Zn(2+) as cofactor.

It catalyses the reaction 7-aminomethyl-7-carbaguanine + guanosine(34) in tRNA = 7-aminomethyl-7-carbaguanosine(34) in tRNA + guanine. It participates in tRNA modification; tRNA-queuosine biosynthesis. In terms of biological role, catalyzes the base-exchange of a guanine (G) residue with the queuine precursor 7-aminomethyl-7-deazaguanine (PreQ1) at position 34 (anticodon wobble position) in tRNAs with GU(N) anticodons (tRNA-Asp, -Asn, -His and -Tyr). Catalysis occurs through a double-displacement mechanism. The nucleophile active site attacks the C1' of nucleotide 34 to detach the guanine base from the RNA, forming a covalent enzyme-RNA intermediate. The proton acceptor active site deprotonates the incoming PreQ1, allowing a nucleophilic attack on the C1' of the ribose to form the product. After dissociation, two additional enzymatic reactions on the tRNA convert PreQ1 to queuine (Q), resulting in the hypermodified nucleoside queuosine (7-(((4,5-cis-dihydroxy-2-cyclopenten-1-yl)amino)methyl)-7-deazaguanosine). In Granulibacter bethesdensis (strain ATCC BAA-1260 / CGDNIH1), this protein is Queuine tRNA-ribosyltransferase.